Reading from the N-terminus, the 182-residue chain is MKTAILDLERLPERGEVVINAEGHIAGRLATYIAKALLEKPGLRIVVVNAEKLVVTGDEKMVVEWFKRKISEWGTHYNPEKAGPKIPRRPDRVFKRMVRGMLPKRAESGRRALKRLRVYVSVPMELLSRKRLVVYEVPPAKLRMRPLAKYVTLEEVWRQVDPAAWEQWKKAQELWQKRLKPS.

This sequence belongs to the universal ribosomal protein uL13 family. Part of the 50S ribosomal subunit.

This protein is one of the early assembly proteins of the 50S ribosomal subunit, although it is not seen to bind rRNA by itself. It is important during the early stages of 50S assembly. This chain is Large ribosomal subunit protein uL13, found in Pyrobaculum neutrophilum (strain DSM 2338 / JCM 9278 / NBRC 100436 / V24Sta) (Thermoproteus neutrophilus).